Consider the following 235-residue polypeptide: MDLLFGSTNPGKLRELRRLVAGLPLRVVSPDDLGRPLPVVVEDGATFQANAEKKAVAWARWSGLHAVADDSGLCVDALGGAPGVHSARWSDLEPEGPASPVCELAGVAELELGPVAGRAARDERNNDKLLAALSGLPDPRRGARYEAVLALARPDGTLVGTVTGTCPGRIGHARRGDGGFGYDPLFVPAAELAAGEGARVRTMAELSSDEKDALSHRGEAFRKLLPMLAALARGA.

7–12 (STNPGK) is a substrate binding site. Asp70 (proton acceptor) is an active-site residue. Mg(2+) is bound at residue Asp70. Substrate-binding positions include Ser71, 180–183 (FGYD), Lys211, and 216–217 (HR).

The protein belongs to the HAM1 NTPase family. In terms of assembly, homodimer. The cofactor is Mg(2+).

It catalyses the reaction XTP + H2O = XMP + diphosphate + H(+). It carries out the reaction dITP + H2O = dIMP + diphosphate + H(+). The catalysed reaction is ITP + H2O = IMP + diphosphate + H(+). Functionally, pyrophosphatase that catalyzes the hydrolysis of nucleoside triphosphates to their monophosphate derivatives, with a high preference for the non-canonical purine nucleotides XTP (xanthosine triphosphate), dITP (deoxyinosine triphosphate) and ITP. Seems to function as a house-cleaning enzyme that removes non-canonical purine nucleotides from the nucleotide pool, thus preventing their incorporation into DNA/RNA and avoiding chromosomal lesions. The polypeptide is dITP/XTP pyrophosphatase (Anaeromyxobacter dehalogenans (strain 2CP-C)).